The primary structure comprises 203 residues: ESCRT-related protein CHMP1B (203 aa).

Coiled coils occupy residues 13–51 and 109–140; these read DLKF…MDGA and GNLQ…NAMA. A disordered region spans residues 172 to 203; sequence PQPAGHAIPTKTEEKVDEDDLSRRLAELKARG. Residues 192–203 show a composition bias toward basic and acidic residues; it reads LSRRLAELKARG.

It belongs to the SNF7 family. In terms of assembly, interacts with CHMP1A and LIP5. Interacts with VPS2.2.

Its subcellular location is the cytoplasm. It localises to the endosome membrane. In terms of biological role, involved in ESCRT-dependent multivesicular body (MVB) formation and sorting of endosomal cargo proteins into MVBs. Mediates the MVB sorting of the auxin carriers PIN1, PIN2 and AUX1. Required for embryonic axis establishment and seedling growth. Required for autophagic degradation of plastid proteins. Promotes the efficient sequestration of cargo from plastids into autophagosomes. Mediates the efficient delivery of autophagic plastid bodies to the vacuole, but not into the cytoplasm. The sequence is that of ESCRT-related protein CHMP1B from Arabidopsis thaliana (Mouse-ear cress).